We begin with the raw amino-acid sequence, 205 residues long: MKMMKVMMLIVMMMMVMVMVSEGSIIEPTCKETPDFNLCVSLLNSDPRGSSADTSGLALILIDKIKGLATKTLNEINGLYKKRPELKRALDECSRRYKTILNADVPEAIEAISKGVPKFGEDGVIDAGVEASVCQGGFNGSSPLTSLTKSMQKISNVTRAIFYSNSIVKEEACGSSWPSLALNIDSKACVVSLQNIQFNRGRTCW.

The first 23 residues, 1-23, serve as a signal peptide directing secretion; that stretch reads MKMMKVMMLIVMMMMVMVMVSEG. Intrachain disulfides connect C30/C39 and C93/C134. N-linked (GlcNAc...) asparagine glycosylation is found at N139 and N156.

This sequence belongs to the PMEI family. Mostly expressed in roots, senescent leaves and flowers (in sepals), and, to a lower extent, in stems, specifically in the vascular tissues (e.g. in the phloem).

It localises to the vacuole. Functionally, inhibits fructosidases from vacuoles (vacuolar invertase VI). In Arabidopsis thaliana (Mouse-ear cress), this protein is Cell wall / vacuolar inhibitor of fructosidase 1 (C/VIF1).